A 732-amino-acid chain; its full sequence is Lanosterol synthase (732 aa).

Thr-2 carries the post-translational modification N-acetylthreonine. PFTB repeat units lie at residues 77–121 (ALNG…PLPA), 124–165 (REEI…RILG), 424–468 (PDNP…LLLQ), 483–528 (LCDA…MIDY), 560–600 (LTQG…ACMG), 612–653 (VSRA…HNTC), and 670–712 (QERG…NIFP). Catalysis depends on Asp-455, which acts as the Proton donor.

The protein belongs to the terpene cyclase/mutase family. In terms of assembly, monomer. As to expression, widely expressed. Expressed in the hair bulb, the outer root sheath and hair matrix of the hair follicle epithelium. Also detected in dermal papilla, epidermis, sweat glands, sebaceous glands, and blood vessels.

It is found in the endoplasmic reticulum membrane. It catalyses the reaction (S)-2,3-epoxysqualene = lanosterol. It functions in the pathway terpene metabolism; lanosterol biosynthesis; lanosterol from farnesyl diphosphate: step 3/3. Functionally, key enzyme in the cholesterol biosynthesis pathway. Catalyzes the cyclization of (S)-2,3 oxidosqualene to lanosterol, a reaction that forms the sterol nucleus. Through the production of lanosterol may regulate lens protein aggregation and increase transparency. The protein is Lanosterol synthase (LSS) of Homo sapiens (Human).